A 137-amino-acid polypeptide reads, in one-letter code: Small ribosomal subunit protein eS19 (137 aa).

This sequence belongs to the eukaryotic ribosomal protein eS19 family. In terms of assembly, component of the small ribosomal subunit.

Its subcellular location is the cytoplasm. This chain is Small ribosomal subunit protein eS19 (RPS19), found in Encephalitozoon cuniculi (strain GB-M1) (Microsporidian parasite).